Consider the following 361-residue polypeptide: 5-formaminoimidazole-4-carboxamide-1-(beta)-D-ribofuranosyl 5'-monophosphate synthetase (361 aa).

The 5-amino-1-(5-phospho-beta-D-ribosyl)imidazole-4-carboxamide site is built by histidine 27 and serine 94. The 233-residue stretch at 116–348 folds into the ATP-grasp domain; the sequence is RAILRWEAER…MGQRIAREIK (233 aa). ATP contacts are provided by residues 146–208 and glutamate 230; that span reads PDDI…ANYC. Asparagine 258 contacts 5-amino-1-(5-phospho-beta-D-ribosyl)imidazole-4-carboxamide. Residues glutamine 297 and glutamate 310 each coordinate Mg(2+).

This sequence belongs to the phosphohexose mutase family. It depends on Mg(2+) as a cofactor. The cofactor is Mn(2+).

It carries out the reaction 5-amino-1-(5-phospho-beta-D-ribosyl)imidazole-4-carboxamide + formate + ATP = 5-formamido-1-(5-phospho-D-ribosyl)imidazole-4-carboxamide + ADP + phosphate. It participates in purine metabolism; IMP biosynthesis via de novo pathway; 5-formamido-1-(5-phospho-D-ribosyl)imidazole-4-carboxamide from 5-amino-1-(5-phospho-D-ribosyl)imidazole-4-carboxamide (formate route): step 1/1. Its function is as follows. Catalyzes the ATP- and formate-dependent formylation of 5-aminoimidazole-4-carboxamide-1-beta-d-ribofuranosyl 5'-monophosphate (AICAR) to 5-formaminoimidazole-4-carboxamide-1-beta-d-ribofuranosyl 5'-monophosphate (FAICAR) in the absence of folates. This chain is 5-formaminoimidazole-4-carboxamide-1-(beta)-D-ribofuranosyl 5'-monophosphate synthetase, found in Methanococcus maripaludis (strain C7 / ATCC BAA-1331).